A 361-amino-acid polypeptide reads, in one-letter code: Ribosomal RNA large subunit methyltransferase M (361 aa).

S-adenosyl-L-methionine is bound by residues serine 187, 220 to 223 (CPGG), aspartate 239, aspartate 259, and aspartate 276. Lysine 305 acts as the Proton acceptor in catalysis.

Belongs to the class I-like SAM-binding methyltransferase superfamily. RNA methyltransferase RlmE family. RlmM subfamily. As to quaternary structure, monomer.

The protein localises to the cytoplasm. It catalyses the reaction cytidine(2498) in 23S rRNA + S-adenosyl-L-methionine = 2'-O-methylcytidine(2498) in 23S rRNA + S-adenosyl-L-homocysteine + H(+). Its function is as follows. Catalyzes the 2'-O-methylation at nucleotide C2498 in 23S rRNA. The sequence is that of Ribosomal RNA large subunit methyltransferase M from Shewanella putrefaciens (strain CN-32 / ATCC BAA-453).